Reading from the N-terminus, the 387-residue chain is Hydroxycarboxylic acid receptor 3 (387 aa).

The Extracellular portion of the chain corresponds to 1–28 (MNRHHLQDHFLEIDKKNCCVFRDDFIAK). Residues 29 to 50 (VLPPVLGLEFIFGLLGNGLALW) traverse the membrane as a helical segment. The Cytoplasmic segment spans residues 51–63 (IFCFHLKSWKSSR). A helical membrane pass occupies residues 64–85 (IFLFNLAVADFLLIICLPFVMD). Over 86-102 (YYVRRSDWKFGDIPCRL) the chain is Extracellular. The cysteines at positions 100 and 177 are disulfide-linked. Residues 103-123 (VLFMFAMNRQGSIIFLTVVAV) traverse the membrane as a helical segment. Over 124–142 (DRYFRVVHPHHALNKISNW) the chain is Cytoplasmic. Residues 143-163 (TAAIISCLLWGITVGLTVHLL) traverse the membrane as a helical segment. Residues 164-194 (KKKLLIQNGTANVCISFSICHTFRWHEAMFL) lie on the Extracellular side of the membrane. Residues 195-209 (LEFFLPLGIILFCSA) traverse the membrane as a helical segment. Residues 210-236 (RIIWSLRQRQMDRHAKIKRAITFIMVV) are Cytoplasmic-facing. The helical transmembrane segment at 237 to 256 (AIVFVICFLPSVVVRIHIFW) threads the bilayer. The Extracellular portion of the chain corresponds to 257–273 (LLHTSGTQNCEVYRSVD). A helical membrane pass occupies residues 274-298 (LAFFITLSFTYMNSMLDPVVYYFSS). The Cytoplasmic segment spans residues 299–387 (PSFPNFFSTL…LEKQLGCCIE (89 aa)). Positions 319–343 (GEPDNNRSTSVELTGDPNKTRGAPE) are disordered.

It belongs to the G-protein coupled receptor 1 family. In terms of tissue distribution, expression largely restricted to adipose tissue and spleen.

It is found in the cell membrane. Functionally, receptor for 3-OH-octanoid acid mediates a negative feedback regulation of adipocyte lipolysis to counteract prolipolytic influences under conditions of physiological or pathological increases in beta-oxidation rates. Acts as a low affinity receptor for nicotinic acid. This pharmacological effect requires nicotinic acid doses that are much higher than those provided by a normal diet. This chain is Hydroxycarboxylic acid receptor 3 (HCAR3), found in Homo sapiens (Human).